Here is a 355-residue protein sequence, read N- to C-terminus: MAASAAVFLRLRSGLRQGARGLCARLATPPPRAPDQAAEIGSRAGTKAQTQGPQQQRSSEGPSYAKKVALWLARLLGAGGTVSVIYIFGNNAVDENGAKIPDEFDNDPILVQQLRRTYKYFKDYRQMIIEPTSPCLLPDPLREPYYQPPYTLVLELTGVLLHPEWSLATGWRFKKRPGIETLFQQLAPLYEIVIFTSETGMTAFPLIDSVDPHGFISYRLFRDATRYMDGHHVKDISCLNRDPARVVVVDCKKEAFRLQPYNGVALRPWDGNSDDRVLLDLSAFLKTIALNGVEDVRTVLEHYALEEDPLEAFKQRQSRLEQEEQQRLAELSKSSKQNLFFSSLTSRLWPRSKQP.

The transit peptide at 1–44 directs the protein to the mitochondrion; that stretch reads MAASAAVFLRLRSGLRQGARGLCARLATPPPRAPDQAAEIGSRA. A disordered region spans residues 25–61; sequence RLATPPPRAPDQAAEIGSRAGTKAQTQGPQQQRSSEG. Over 45-67 the chain is Mitochondrial matrix; it reads GTKAQTQGPQQQRSSEGPSYAKK. Over residues 47–61 the composition is skewed to polar residues; it reads KAQTQGPQQQRSSEG. A helical membrane pass occupies residues 68–88; sequence VALWLARLLGAGGTVSVIYIF. Residues 89–355 lie on the Mitochondrial intermembrane side of the membrane; that stretch reads GNNAVDENGA…SRLWPRSKQP (267 aa). The FCP1 homology domain maps to 145-288; the sequence is YYQPPYTLVL…LDLSAFLKTI (144 aa). At Ser-343 the chain carries Phosphoserine.

It belongs to the TIM50 family. In terms of assembly, component of the TIM23 complex at least composed of TIMM23, TIMM17 (TIMM17A or TIMM17B) and TIMM50; within this complex, directly interacts with TIMM23. The complex interacts with the TIMM44 component of the PAM complex and with DNAJC15.

The protein resides in the mitochondrion inner membrane. Functionally, essential component of the TIM23 complex, a complex that mediates the translocation of transit peptide-containing proteins across the mitochondrial inner membrane. Has some phosphatase activity in vitro; however such activity may not be relevant in vivo. The protein is Mitochondrial import inner membrane translocase subunit TIM50 (TIMM50) of Bos taurus (Bovine).